A 206-amino-acid polypeptide reads, in one-letter code: Thymidylate kinase (206 aa).

7–14 (GGEGSGKS) serves as a coordination point for ATP.

Belongs to the thymidylate kinase family.

It carries out the reaction dTMP + ATP = dTDP + ADP. Phosphorylation of dTMP to form dTDP in both de novo and salvage pathways of dTTP synthesis. This is Thymidylate kinase (tmk) from Chlamydia pneumoniae (Chlamydophila pneumoniae).